Here is a 329-residue protein sequence, read N- to C-terminus: Probable carboxylesterase 8 (329 aa).

An Involved in the stabilization of the negatively charged intermediate by the formation of the oxyanion hole motif is present at residues 73-75; the sequence is HGG. Active-site residues include S161, D264, and H294.

Belongs to the 'GDXG' lipolytic enzyme family. Expressed in leaves, stems, flowers and siliques.

It carries out the reaction a carboxylic ester + H2O = an alcohol + a carboxylate + H(+). Its function is as follows. Carboxylesterase acting on esters with varying acyl chain length. The sequence is that of Probable carboxylesterase 8 (CXE8) from Arabidopsis thaliana (Mouse-ear cress).